We begin with the raw amino-acid sequence, 189 residues long: Peptidyl-tRNA hydrolase (189 aa).

Tyr14 contributes to the tRNA binding site. His19 (proton acceptor) is an active-site residue. The tRNA site is built by Tyr64, Asn66, and Asn112.

It belongs to the PTH family. In terms of assembly, monomer.

The protein resides in the cytoplasm. The catalysed reaction is an N-acyl-L-alpha-aminoacyl-tRNA + H2O = an N-acyl-L-amino acid + a tRNA + H(+). Hydrolyzes ribosome-free peptidyl-tRNAs (with 1 or more amino acids incorporated), which drop off the ribosome during protein synthesis, or as a result of ribosome stalling. In terms of biological role, catalyzes the release of premature peptidyl moieties from peptidyl-tRNA molecules trapped in stalled 50S ribosomal subunits, and thus maintains levels of free tRNAs and 50S ribosomes. This is Peptidyl-tRNA hydrolase from Dehalococcoides mccartyi (strain ATCC BAA-2100 / JCM 16839 / KCTC 5957 / BAV1).